The following is a 539-amino-acid chain: Phosphoenolpyruvate carboxykinase (ATP) (539 aa).

The substrate site is built by R64, Y206, and K212. Residues K212, H231, and G247–T255 contribute to the ATP site. Residues K212 and H231 each contribute to the Mn(2+) site. Residue D268 participates in Mn(2+) binding. ATP-binding positions include E296, R332, R448 to I449, and T454. Residue R332 participates in substrate binding.

Belongs to the phosphoenolpyruvate carboxykinase (ATP) family. As to quaternary structure, monomer. Mn(2+) serves as cofactor.

It localises to the cytoplasm. It carries out the reaction oxaloacetate + ATP = phosphoenolpyruvate + ADP + CO2. It participates in carbohydrate biosynthesis; gluconeogenesis. In terms of biological role, involved in the gluconeogenesis. Catalyzes the conversion of oxaloacetate (OAA) to phosphoenolpyruvate (PEP) through direct phosphoryl transfer between the nucleoside triphosphate and OAA. The chain is Phosphoenolpyruvate carboxykinase (ATP) from Salmonella agona (strain SL483).